We begin with the raw amino-acid sequence, 175 residues long: Protein SELF-PRUNING (175 aa).

Belongs to the phosphatidylethanolamine-binding protein family.

The protein resides in the cytoplasm. Its function is as follows. Not known. In plants homozygous for the recessive allele of the SP gene, sympodial segments develop progressively fewer nodes until the shoot is terminated by two consecutive. inflorescences. This is Protein SELF-PRUNING (SP) from Solanum lycopersicum (Tomato).